Reading from the N-terminus, the 300-residue chain is N-carbamoylputrescine amidase (300 aa).

One can recognise a CN hydrolase domain in the interval 8–266 (VTVAALQFAC…EAVLVAQFDL (259 aa)). Glu47 functions as the Proton acceptor in the catalytic mechanism. Lys120 acts as the Proton donor in catalysis. Cys157 (nucleophile) is an active-site residue.

This sequence belongs to the carbon-nitrogen hydrolase superfamily. In terms of assembly, homooctamer.

It carries out the reaction N-carbamoylputrescine + H2O + 2 H(+) = putrescine + NH4(+) + CO2. The protein operates within amine and polyamine biosynthesis; putrescine biosynthesis via agmatine pathway; putrescine from N-carbamoylputrescine (amidase route): step 1/1. Functionally, involved in polyamine biosynthesis. This chain is N-carbamoylputrescine amidase (CPA), found in Solanum lycopersicum (Tomato).